The following is a 206-amino-acid chain: MLTVALPKGRIAEQTLEIFAEIFGGEFKFEGRELIMEKEGFKFLNVRNQDVPTYVEHGAADIGVVGLDVITEKELDIIQLLDMQLGKCKVAIGIKNEDELDWNRPNIKVATKMVNIAKNYFAQKAVGVEVVKLYGSIELAPLVGLADAIVDIVETGNTMRENGLKVAEDIMDSSAHLIANKNSFYGKKEEILSLYEKIKAVVESRG.

The protein belongs to the ATP phosphoribosyltransferase family. Short subfamily. Heteromultimer composed of HisG and HisZ subunits.

The protein localises to the cytoplasm. It carries out the reaction 1-(5-phospho-beta-D-ribosyl)-ATP + diphosphate = 5-phospho-alpha-D-ribose 1-diphosphate + ATP. Its pathway is amino-acid biosynthesis; L-histidine biosynthesis; L-histidine from 5-phospho-alpha-D-ribose 1-diphosphate: step 1/9. Its function is as follows. Catalyzes the condensation of ATP and 5-phosphoribose 1-diphosphate to form N'-(5'-phosphoribosyl)-ATP (PR-ATP). Has a crucial role in the pathway because the rate of histidine biosynthesis seems to be controlled primarily by regulation of HisG enzymatic activity. This chain is ATP phosphoribosyltransferase, found in Sulfurovum sp. (strain NBC37-1).